We begin with the raw amino-acid sequence, 410 residues long: Ribosomal RNA large subunit methyltransferase G (410 aa).

The protein belongs to the methyltransferase superfamily. RlmG family.

It is found in the cytoplasm. The catalysed reaction is guanosine(1835) in 23S rRNA + S-adenosyl-L-methionine = N(2)-methylguanosine(1835) in 23S rRNA + S-adenosyl-L-homocysteine + H(+). In terms of biological role, specifically methylates the guanine in position 1835 (m2G1835) of 23S rRNA. This Alteromonas mediterranea (strain DSM 17117 / CIP 110805 / LMG 28347 / Deep ecotype) protein is Ribosomal RNA large subunit methyltransferase G.